The primary structure comprises 347 residues: MNIINNSENVCTGVKIWLCICCIGILVMVFIGGITRLTHSGLSITEWNPVIGIFPPVTEKMWIAEKIKYMATPEYKYITSNITLTEFKKLYLIEYFHRLLGRIVGLVFLIPFLYFMYKQKLSKNLIHRFILIAFLILVQGVMGWYMVKSGLIDRPHVSHYRLAMHLLLALAIFYLLWKHFLLSVVHQIKCNIKVTNTSVFYIIISLITIQITCGALVAGLNAGLLSKDIPFLSDKVGLNDLLFIKPWWHNIYNNPITVQFIHEVIALLILIIVVITLLVLKVRIFPMYLLLALLLIQLTLGILTFIYNVPIILASLHQVTAFILFASSIYLLHYVKLLQIQYVKNKI.

The next 8 membrane-spanning stretches (helical) occupy residues valine 14 to isoleucine 34, phenylalanine 96 to methionine 116, phenylalanine 129 to serine 149, leucine 162 to leucine 182, valine 199 to glycine 219, phenylalanine 260 to leucine 280, methionine 287 to tyrosine 307, and isoleucine 311 to leucine 331. Histidine 262 is a heme binding site. Position 317 (histidine 317) interacts with heme.

It belongs to the COX15/CtaA family. Type 2 subfamily. In terms of assembly, interacts with CtaB. It depends on heme b as a cofactor.

It is found in the cell membrane. It catalyses the reaction Fe(II)-heme o + 2 A + H2O = Fe(II)-heme a + 2 AH2. The protein operates within porphyrin-containing compound metabolism; heme A biosynthesis; heme A from heme O: step 1/1. In terms of biological role, catalyzes the conversion of heme O to heme A by two successive hydroxylations of the methyl group at C8. The first hydroxylation forms heme I, the second hydroxylation results in an unstable dihydroxymethyl group, which spontaneously dehydrates, resulting in the formyl group of heme A. This chain is Heme A synthase, found in Ehrlichia ruminantium (strain Welgevonden).